Reading from the N-terminus, the 285-residue chain is RNase adapter protein RapZ (285 aa).

8 to 15 (GRSGSGKS) contributes to the ATP binding site. Position 56–59 (56–59 (DVRN)) interacts with GTP. The RNA-binding stretch occupies residues 266-285 (RSRGKNVQSRHRTLEKRKPS).

This sequence belongs to the RapZ-like family. RapZ subfamily. Homotrimer.

In terms of biological role, modulates the synthesis of GlmS, by affecting the processing and stability of the regulatory small RNA GlmZ. When glucosamine-6-phosphate (GlcN6P) concentrations are high in the cell, RapZ binds GlmZ and targets it to cleavage by RNase E. Consequently, GlmZ is inactivated and unable to activate GlmS synthesis. Under low GlcN6P concentrations, RapZ is sequestered and inactivated by an other regulatory small RNA, GlmY, preventing GlmZ degradation and leading to synthesis of GlmS. The chain is RNase adapter protein RapZ from Pectobacterium atrosepticum (strain SCRI 1043 / ATCC BAA-672) (Erwinia carotovora subsp. atroseptica).